A 583-amino-acid polypeptide reads, in one-letter code: Radixin (583 aa).

Positions 5–295 (INVRVTTMDA…GNHELYMRRR (291 aa)) constitute an FERM domain. A 1,2-diacyl-sn-glycero-3-phospho-(1D-myo-inositol) is bound at residue 60–63 (KLNK). Lys-83 is modified (N6-succinyllysine). Lys-278 contributes to the a 1,2-diacyl-sn-glycero-3-phospho-(1D-myo-inositol) binding site. Disordered stretches follow at residues 309-336 (AREEKHQKQLERAQLENEKKKREIAEKE), 374-407 (ELDQERKRAKEEAERLEKERQAAEEAKSALAKQA), and 460-526 (KEEL…RVKK). A compositionally biased stretch (basic and acidic residues) spans 374-400 (ELDQERKRAKEEAERLEKERQAAEEAK). Residues 469–480 (APPPPPPPPVIP) are compositionally biased toward pro residues. Composition is skewed to basic and acidic residues over residues 483-492 (ENEHDEHDEN) and 506-525 (MNHRSEEERVTETQKNERVK). Position 564 is a phosphothreonine; by ROCK2 (Thr-564).

In terms of assembly, interacts with CPNE1 (via VWFA domain) and CPNE4 (via VWFA domain). Binds NHERF1. Interacts with NHERF1, NHERF2, LAYN, MME/NEP and ICAM2. Interacts (via FERM domain) with SPN/CD43 cytoplasmic tail. Interacts with CD44. Interacts with CLIC5; may work together in a complex which also includes EZR and MYO6 to stabilize linkages between the plasma membrane and subjacent actin cytoskeleton at the base of stereocilia. Post-translationally, phosphorylated by tyrosine-protein kinases. Phosphorylation by ROCK2 suppresses the head-to-tail association of the N-terminal and C-terminal halves resulting in an opened conformation which is capable of actin and membrane-binding.

Its subcellular location is the cell membrane. The protein localises to the cytoplasm. It localises to the cytoskeleton. The protein resides in the cleavage furrow. It is found in the cell projection. Its subcellular location is the microvillus. The protein localises to the stereocilium. Its activity is regulated as follows. A head-to-tail association, of the N-terminal and C-terminal halves results in a closed conformation (inactive form) which is incapable of actin or membrane-binding. In terms of biological role, probably plays a crucial role in the binding of the barbed end of actin filaments to the plasma membrane. The chain is Radixin (RDX) from Bos taurus (Bovine).